The sequence spans 439 residues: Trigger factor (439 aa).

One can recognise a PPIase FKBP-type domain in the interval 175 to 260 (SDKLVIDYQN…VKSVYVMKGM (86 aa)).

Belongs to the FKBP-type PPIase family. Tig subfamily.

It is found in the cytoplasm. It catalyses the reaction [protein]-peptidylproline (omega=180) = [protein]-peptidylproline (omega=0). In terms of biological role, involved in protein export. Acts as a chaperone by maintaining the newly synthesized protein in an open conformation. Functions as a peptidyl-prolyl cis-trans isomerase. In Ehrlichia chaffeensis (strain ATCC CRL-10679 / Arkansas), this protein is Trigger factor.